We begin with the raw amino-acid sequence, 572 residues long: Dihydroxy-acid dehydratase (572 aa).

Residue cysteine 57 coordinates [2Fe-2S] cluster. Aspartate 89 is a Mg(2+) binding site. Cysteine 130 lines the [2Fe-2S] cluster pocket. Mg(2+) is bound by residues aspartate 131 and lysine 132. N6-carboxylysine is present on lysine 132. Cysteine 202 serves as a coordination point for [2Fe-2S] cluster. Residue glutamate 453 participates in Mg(2+) binding. The active-site Proton acceptor is the serine 479.

This sequence belongs to the IlvD/Edd family. In terms of assembly, homodimer. It depends on [2Fe-2S] cluster as a cofactor. Mg(2+) is required as a cofactor.

It catalyses the reaction (2R)-2,3-dihydroxy-3-methylbutanoate = 3-methyl-2-oxobutanoate + H2O. The enzyme catalyses (2R,3R)-2,3-dihydroxy-3-methylpentanoate = (S)-3-methyl-2-oxopentanoate + H2O. It functions in the pathway amino-acid biosynthesis; L-isoleucine biosynthesis; L-isoleucine from 2-oxobutanoate: step 3/4. The protein operates within amino-acid biosynthesis; L-valine biosynthesis; L-valine from pyruvate: step 3/4. Its function is as follows. Functions in the biosynthesis of branched-chain amino acids. Catalyzes the dehydration of (2R,3R)-2,3-dihydroxy-3-methylpentanoate (2,3-dihydroxy-3-methylvalerate) into 2-oxo-3-methylpentanoate (2-oxo-3-methylvalerate) and of (2R)-2,3-dihydroxy-3-methylbutanoate (2,3-dihydroxyisovalerate) into 2-oxo-3-methylbutanoate (2-oxoisovalerate), the penultimate precursor to L-isoleucine and L-valine, respectively. This is Dihydroxy-acid dehydratase from Streptococcus sanguinis (strain SK36).